The sequence spans 172 residues: MQNKRESYTREDLLASSQGELFGPGYPQLPAPNMLMMDRVTKMSETEGDFGKGLILAELDIKPDLWFFDCHFPGDPVMPGCLGLDAMWQLVGFFLGWVGGKGKGRALGVGEVKFTGQILPTAKKVTYEIHMKRVVNRKLVMGLADGRVLVDGKEIYVAKDLKVGLFQDTSAF.

His-71 is a catalytic residue.

The protein belongs to the thioester dehydratase family. FabA subfamily. In terms of assembly, homodimer.

The protein localises to the cytoplasm. The catalysed reaction is a (3R)-hydroxyacyl-[ACP] = a (2E)-enoyl-[ACP] + H2O. It catalyses the reaction (3R)-hydroxydecanoyl-[ACP] = (2E)-decenoyl-[ACP] + H2O. It carries out the reaction (2E)-decenoyl-[ACP] = (3Z)-decenoyl-[ACP]. The protein operates within lipid metabolism; fatty acid biosynthesis. Necessary for the introduction of cis unsaturation into fatty acids. Catalyzes the dehydration of (3R)-3-hydroxydecanoyl-ACP to E-(2)-decenoyl-ACP and then its isomerization to Z-(3)-decenoyl-ACP. Can catalyze the dehydratase reaction for beta-hydroxyacyl-ACPs with saturated chain lengths up to 16:0, being most active on intermediate chain length. This Vibrio vulnificus (strain CMCP6) protein is 3-hydroxydecanoyl-[acyl-carrier-protein] dehydratase.